Here is a 264-residue protein sequence, read N- to C-terminus: S-adenosylmethionine decarboxylase proenzyme (264 aa).

The active-site Schiff-base intermediate with substrate; via pyruvic acid is serine 113. Residue serine 113 is modified to Pyruvic acid (Ser); by autocatalysis. Histidine 118 (proton acceptor; for processing activity) is an active-site residue. Cysteine 141 (proton donor; for catalytic activity) is an active-site residue.

This sequence belongs to the prokaryotic AdoMetDC family. Type 2 subfamily. Heterooctamer of four alpha and four beta chains arranged as a tetramer of alpha/beta heterodimers. Requires pyruvate as cofactor. Is synthesized initially as an inactive proenzyme. Formation of the active enzyme involves a self-maturation process in which the active site pyruvoyl group is generated from an internal serine residue via an autocatalytic post-translational modification. Two non-identical subunits are generated from the proenzyme in this reaction, and the pyruvate is formed at the N-terminus of the alpha chain, which is derived from the carboxyl end of the proenzyme. The post-translation cleavage follows an unusual pathway, termed non-hydrolytic serinolysis, in which the side chain hydroxyl group of the serine supplies its oxygen atom to form the C-terminus of the beta chain, while the remainder of the serine residue undergoes an oxidative deamination to produce ammonia and the pyruvoyl group blocking the N-terminus of the alpha chain.

The enzyme catalyses S-adenosyl-L-methionine + H(+) = S-adenosyl 3-(methylsulfanyl)propylamine + CO2. It participates in amine and polyamine biosynthesis; S-adenosylmethioninamine biosynthesis; S-adenosylmethioninamine from S-adenosyl-L-methionine: step 1/1. In terms of biological role, catalyzes the decarboxylation of S-adenosylmethionine to S-adenosylmethioninamine (dcAdoMet), the propylamine donor required for the synthesis of the polyamines spermine and spermidine from the diamine putrescine. The protein is S-adenosylmethionine decarboxylase proenzyme of Pseudomonas aeruginosa (strain ATCC 15692 / DSM 22644 / CIP 104116 / JCM 14847 / LMG 12228 / 1C / PRS 101 / PAO1).